Consider the following 610-residue polypeptide: Cytosolic 5'-nucleotidase 1B (610 aa).

Disordered regions lie at residues 1–34 and 101–277; these read MSQT…DKTG and GSQE…DEDD. Residues 9–34 show a composition bias toward basic and acidic residues; sequence KKNEPGMRSSKESLEAEKRKESDKTG. Residues 119-132 show a composition bias toward polar residues; that stretch reads SQWSRISRSPSTKA. The span at 148 to 166 shows a compositional bias: low complexity; that stretch reads PSSSTSSRTPSTSPSLHDS. Residues 167–183 are compositionally biased toward pro residues; sequence SPPPLSGQPSLQPPASP. Residues 236–265 show a composition bias toward polar residues; sequence SRTSPTEWKSSSQRRGIYPASTQLDRNSLS. Asp467 functions as the Nucleophile in the catalytic mechanism.

The protein belongs to the 5'-nucleotidase type 3 family. Mg(2+) is required as a cofactor. As to expression, highly expressed in testis, placenta and pancreas. Detected at lower levels in heart, kidney, liver and lung.

It is found in the cytoplasm. It catalyses the reaction a ribonucleoside 5'-phosphate + H2O = a ribonucleoside + phosphate. The enzyme catalyses AMP + H2O = adenosine + phosphate. Its activity is regulated as follows. Activated by ADP. In terms of biological role, catalyzes the hydrolysis of nucleotide monophosphates, releasing inorganic phosphate and the corresponding nucleoside, AMP is the major substrate. The chain is Cytosolic 5'-nucleotidase 1B (NT5C1B) from Homo sapiens (Human).